The primary structure comprises 218 residues: Thiopurine S-methyltransferase (218 aa).

Residues tryptophan 10, leucine 45, glutamate 66, and arginine 123 each contribute to the S-adenosyl-L-methionine site.

Belongs to the class I-like SAM-binding methyltransferase superfamily. TPMT family.

It is found in the cytoplasm. It catalyses the reaction S-adenosyl-L-methionine + a thiopurine = S-adenosyl-L-homocysteine + a thiopurine S-methylether.. In Shewanella loihica (strain ATCC BAA-1088 / PV-4), this protein is Thiopurine S-methyltransferase.